The following is a 172-amino-acid chain: Inorganic pyrophosphatase (172 aa).

Substrate is bound by residues Lys-28, Arg-42, and Tyr-54. Residues Asp-64, Asp-69, and Asp-101 each contribute to the Mg(2+) site. Position 140 (Tyr-140) interacts with substrate.

It belongs to the PPase family. In terms of assembly, homohexamer. It depends on Mg(2+) as a cofactor.

It localises to the cytoplasm. The catalysed reaction is diphosphate + H2O = 2 phosphate + H(+). In terms of biological role, catalyzes the hydrolysis of inorganic pyrophosphate (PPi) forming two phosphate ions. In Campylobacter jejuni subsp. jejuni serotype O:2 (strain ATCC 700819 / NCTC 11168), this protein is Inorganic pyrophosphatase.